The sequence spans 278 residues: ATP synthase subunit a (278 aa).

The next 6 helical transmembrane spans lie at 41-61 (FLNI…LLFF), 108-128 (LTIF…VDFV), 149-168 (INIT…YFGI), 180-200 (FFFQ…LELI), 222-242 (LIFI…LSVP), and 244-264 (AIFH…LTII).

Belongs to the ATPase A chain family. As to quaternary structure, F-type ATPases have 2 components, CF(1) - the catalytic core - and CF(0) - the membrane proton channel. CF(1) has five subunits: alpha(3), beta(3), gamma(1), delta(1), epsilon(1). CF(0) has three main subunits: a(1), b(2) and c(9-12). The alpha and beta chains form an alternating ring which encloses part of the gamma chain. CF(1) is attached to CF(0) by a central stalk formed by the gamma and epsilon chains, while a peripheral stalk is formed by the delta and b chains.

The protein resides in the cell membrane. Its function is as follows. Key component of the proton channel; it plays a direct role in the translocation of protons across the membrane. The sequence is that of ATP synthase subunit a from Wigglesworthia glossinidia brevipalpis.